The sequence spans 125 residues: Large ribosomal subunit protein bL12 (125 aa).

This sequence belongs to the bacterial ribosomal protein bL12 family. In terms of assembly, homodimer. Part of the ribosomal stalk of the 50S ribosomal subunit. Forms a multimeric L10(L12)X complex, where L10 forms an elongated spine to which 2 to 4 L12 dimers bind in a sequential fashion. Binds GTP-bound translation factors.

Forms part of the ribosomal stalk which helps the ribosome interact with GTP-bound translation factors. Is thus essential for accurate translation. The sequence is that of Large ribosomal subunit protein bL12 from Paraburkholderia phymatum (strain DSM 17167 / CIP 108236 / LMG 21445 / STM815) (Burkholderia phymatum).